The primary structure comprises 102 residues: Salivary protein Salp9 (102 aa).

The N-terminal stretch at 1 to 21 (MGLTEIMLVLVSLAFVATAAA) is a signal peptide. Residues Asn26 and Asn87 are each glycosylated (N-linked (GlcNAc...) asparagine). The interval 83 to 102 (SGVPNDTDAKIEETEEELEA) is disordered.

Belongs to the salp14 family. In terms of tissue distribution, salivary gland (at protein level). Saliva (at protein level). Midgut.

It localises to the secreted. Functionally, salivary protein that facilitates blood feeding of adult ticks on vertebrate species. Inhibits the lectin pathway of complement system activation in the host. This is Salivary protein Salp9 from Ixodes scapularis (Black-legged tick).